Reading from the N-terminus, the 353-residue chain is Type 2 DNA topoisomerase 6 subunit A (353 aa).

The Topo IIA-type catalytic domain occupies 2–138; the sequence is NRREIAINKL…LGLMPEEDGA (137 aa). The active-site O-(5'-phospho-DNA)-tyrosine intermediate is the Tyr-96. Glu-186 and Asp-238 together coordinate Mg(2+).

This sequence belongs to the TOP6A family. As to quaternary structure, homodimer. Heterotetramer of two Top6A and two Top6B chains. Mg(2+) is required as a cofactor.

It carries out the reaction ATP-dependent breakage, passage and rejoining of double-stranded DNA.. Functionally, relaxes both positive and negative superturns and exhibits a strong decatenase activity. This chain is Type 2 DNA topoisomerase 6 subunit A, found in Methanothermobacter thermautotrophicus (strain ATCC 29096 / DSM 1053 / JCM 10044 / NBRC 100330 / Delta H) (Methanobacterium thermoautotrophicum).